The chain runs to 316 residues: 33 kDa chaperonin (316 aa).

Intrachain disulfides connect Cys-239–Cys-241 and Cys-272–Cys-275.

It belongs to the HSP33 family. In terms of processing, under oxidizing conditions two disulfide bonds are formed involving the reactive cysteines. Under reducing conditions zinc is bound to the reactive cysteines and the protein is inactive.

Its subcellular location is the cytoplasm. Functionally, redox regulated molecular chaperone. Protects both thermally unfolding and oxidatively damaged proteins from irreversible aggregation. Plays an important role in the bacterial defense system toward oxidative stress. The sequence is that of 33 kDa chaperonin from Clostridium perfringens (strain SM101 / Type A).